A 98-amino-acid chain; its full sequence is N(2)-fixation sustaining protein CowN (98 aa).

This sequence belongs to the CowN family.

Functionally, is required to sustain N(2)-dependent growth in the presence of low levels of carbon monoxide (CO). Probably acts by protecting the N(2) fixation ability of the nitrogenase complex, which is inactivated in the presence of CO. This Azospirillum sp. (strain B510) protein is N(2)-fixation sustaining protein CowN.